The following is a 260-amino-acid chain: UPF0246 protein Tola_0968 (260 aa).

Belongs to the UPF0246 family.

The polypeptide is UPF0246 protein Tola_0968 (Tolumonas auensis (strain DSM 9187 / NBRC 110442 / TA 4)).